A 382-amino-acid chain; its full sequence is Dual-specificity RNA methyltransferase RlmN (382 aa).

Glu91 functions as the Proton acceptor in the catalytic mechanism. The Radical SAM core domain maps to 97–339 (ETDRGTLCIS…TTVRKTRGDD (243 aa)). Cys104 and Cys344 are joined by a disulfide. Positions 111, 115, and 118 each coordinate [4Fe-4S] cluster. S-adenosyl-L-methionine-binding positions include 165 to 166 (GE), Ser197, 219 to 221 (SLH), and Asn301. Cys344 (S-methylcysteine intermediate) is an active-site residue.

This sequence belongs to the radical SAM superfamily. RlmN family. Requires [4Fe-4S] cluster as cofactor.

It localises to the cytoplasm. It carries out the reaction adenosine(2503) in 23S rRNA + 2 reduced [2Fe-2S]-[ferredoxin] + 2 S-adenosyl-L-methionine = 2-methyladenosine(2503) in 23S rRNA + 5'-deoxyadenosine + L-methionine + 2 oxidized [2Fe-2S]-[ferredoxin] + S-adenosyl-L-homocysteine. It catalyses the reaction adenosine(37) in tRNA + 2 reduced [2Fe-2S]-[ferredoxin] + 2 S-adenosyl-L-methionine = 2-methyladenosine(37) in tRNA + 5'-deoxyadenosine + L-methionine + 2 oxidized [2Fe-2S]-[ferredoxin] + S-adenosyl-L-homocysteine. In terms of biological role, specifically methylates position 2 of adenine 2503 in 23S rRNA and position 2 of adenine 37 in tRNAs. m2A2503 modification seems to play a crucial role in the proofreading step occurring at the peptidyl transferase center and thus would serve to optimize ribosomal fidelity. The chain is Dual-specificity RNA methyltransferase RlmN from Polaromonas sp. (strain JS666 / ATCC BAA-500).